The primary structure comprises 124 residues: Protein TAR1 (124 aa).

Positions 80 to 124 (KNRTPRHTGFSPSMTSCSKEHRQGTAPKLPSPNYNSGTEGTRFQI) are disordered. Residues 111–124 (PNYNSGTEGTRFQI) show a composition bias toward polar residues.

It is found in the mitochondrion. May be involved in mtDNA stability or mitochondrial gene expression regulation at the post-transcriptional level. This Saccharomyces cerevisiae (strain ATCC 204508 / S288c) (Baker's yeast) protein is Protein TAR1 (TAR1).